Here is a 143-residue protein sequence, read N- to C-terminus: D-aminoacyl-tRNA deacylase (143 aa).

Positions 135–136 (GP) match the Gly-cisPro motif, important for rejection of L-amino acids motif.

It belongs to the DTD family. As to quaternary structure, homodimer.

It localises to the cytoplasm. It catalyses the reaction glycyl-tRNA(Ala) + H2O = tRNA(Ala) + glycine + H(+). It carries out the reaction a D-aminoacyl-tRNA + H2O = a tRNA + a D-alpha-amino acid + H(+). Functionally, an aminoacyl-tRNA editing enzyme that deacylates mischarged D-aminoacyl-tRNAs. Also deacylates mischarged glycyl-tRNA(Ala), protecting cells against glycine mischarging by AlaRS. Acts via tRNA-based rather than protein-based catalysis; rejects L-amino acids rather than detecting D-amino acids in the active site. By recycling D-aminoacyl-tRNA to D-amino acids and free tRNA molecules, this enzyme counteracts the toxicity associated with the formation of D-aminoacyl-tRNA entities in vivo and helps enforce protein L-homochirality. This is D-aminoacyl-tRNA deacylase from Mycobacterium avium (strain 104).